The chain runs to 118 residues: Integration host factor subunit alpha (118 aa).

The segment at 97–118 (NGAMPMSTEESDENTAQSASGG) is disordered.

The protein belongs to the bacterial histone-like protein family. Heterodimer of an alpha and a beta chain.

Its function is as follows. This protein is one of the two subunits of integration host factor, a specific DNA-binding protein that functions in genetic recombination as well as in transcriptional and translational control. This Rhodopseudomonas palustris (strain ATCC BAA-98 / CGA009) protein is Integration host factor subunit alpha.